Reading from the N-terminus, the 957-residue chain is Glycine dehydrogenase (decarboxylating) 2 (957 aa).

Lysine 707 carries the post-translational modification N6-(pyridoxal phosphate)lysine.

It belongs to the GcvP family. As to quaternary structure, the glycine cleavage system is composed of four proteins: P, T, L and H. Pyridoxal 5'-phosphate serves as cofactor.

It catalyses the reaction N(6)-[(R)-lipoyl]-L-lysyl-[glycine-cleavage complex H protein] + glycine + H(+) = N(6)-[(R)-S(8)-aminomethyldihydrolipoyl]-L-lysyl-[glycine-cleavage complex H protein] + CO2. Functionally, the glycine cleavage system catalyzes the degradation of glycine. The P protein binds the alpha-amino group of glycine through its pyridoxal phosphate cofactor; CO(2) is released and the remaining methylamine moiety is then transferred to the lipoamide cofactor of the H protein. The protein is Glycine dehydrogenase (decarboxylating) 2 of Pseudomonas fluorescens (strain ATCC BAA-477 / NRRL B-23932 / Pf-5).